The chain runs to 182 residues: MKLEMALSIALALAVVSWTQEFFPKEAQTLNWSKFSGFWYIIAIATDTQGFLPARDKRKLGASVVKVHKTGQLRVVIAFSRPRGCQSREVTLKKDRKRPVFRNTLKGVKGFHVLSTDYTYGLVYLRLGRGGSNYKSLLLFNRQNISSFLSLREFLDTCHILQLTKQATILPKDDSCAHTILP.

The first 19 residues, 1–19 (MKLEMALSIALALAVVSWT), serve as a signal peptide directing secretion. 2 N-linked (GlcNAc...) asparagine glycosylation sites follow: Asn-31 and Asn-144. Cys-85 and Cys-176 are oxidised to a cystine. Lys-165 is modified (N6-acetyllysine).

This sequence belongs to the calycin superfamily. Lipocalin family. In terms of tissue distribution, expressed in epididymis.

Its subcellular location is the secreted. In terms of biological role, may play a role in male fertility. May act as a retinoid carrier protein within the epididymis. This chain is Epididymal-specific lipocalin-10 (Lcn10), found in Mus musculus (Mouse).